The primary structure comprises 221 residues: Endonuclease V (221 aa).

Asp43 and Asp109 together coordinate Mg(2+).

The protein belongs to the endonuclease V family. The cofactor is Mg(2+).

The protein localises to the cytoplasm. The catalysed reaction is Endonucleolytic cleavage at apurinic or apyrimidinic sites to products with a 5'-phosphate.. DNA repair enzyme involved in the repair of deaminated bases. Selectively cleaves double-stranded DNA at the second phosphodiester bond 3' to a deoxyinosine leaving behind the intact lesion on the nicked DNA. This Petrotoga mobilis (strain DSM 10674 / SJ95) protein is Endonuclease V.